A 228-amino-acid chain; its full sequence is Urease accessory protein UreF (228 aa).

This sequence belongs to the UreF family. In terms of assembly, ureD, UreF and UreG form a complex that acts as a GTP-hydrolysis-dependent molecular chaperone, activating the urease apoprotein by helping to assemble the nickel containing metallocenter of UreC. The UreE protein probably delivers the nickel.

Its subcellular location is the cytoplasm. Required for maturation of urease via the functional incorporation of the urease nickel metallocenter. In Lachnoclostridium phytofermentans (strain ATCC 700394 / DSM 18823 / ISDg) (Clostridium phytofermentans), this protein is Urease accessory protein UreF.